We begin with the raw amino-acid sequence, 810 residues long: Phospholipase D alpha 2 (810 aa).

A C2 domain is found at 1-126 (MEECLLHGRL…LHGEEVDRWV (126 aa)). Ca(2+) is bound at residue Asp187. In terms of domain architecture, PLD phosphodiesterase 1 spans 327 to 365 (TMFTHHQKIVVVDSEMPSGGSRSRRIVSFVGGLDLCDGR). Residues His332, Lys334, and Asp339 contribute to the active site. His332 is an a 1,2-diacyl-sn-glycero-3-phosphate binding site. Residues His371 and His405 each contribute to the Ca(2+) site. Residues Gln521 and His661 each coordinate a 1,2-diacyl-sn-glycero-3-phosphate. A PLD phosphodiesterase 2 domain is found at 656-683 (FMIYVHTKMMIVDDEYIIIGSANINQRS). Catalysis depends on residues His661, Lys663, and Asp668. Position 722 (Glu722) interacts with Ca(2+).

It belongs to the phospholipase D family. C2-PLD subfamily. Ca(2+) is required as a cofactor. In terms of tissue distribution, highly expressed in roots, stems and flowers, moderately in leaves, seedlings and siliques. Not detected in dry seeds.

Its subcellular location is the cytoplasm. It is found in the membrane. It localises to the vacuole. The protein resides in the cytoplasmic vesicle. The protein localises to the clathrin-coated vesicle. It carries out the reaction a 1,2-diacyl-sn-glycero-3-phosphocholine + H2O = a 1,2-diacyl-sn-glycero-3-phosphate + choline + H(+). Functionally, hydrolyzes glycerol-phospholipids at the terminal phosphodiesteric bond to generate phosphatidic acids (PA). Plays an important role in various cellular processes, including phytohormone action and response to stress, characterized by acidification of the cell. The polypeptide is Phospholipase D alpha 2 (Arabidopsis thaliana (Mouse-ear cress)).